Reading from the N-terminus, the 1462-residue chain is Glucosyltransferase-S (1462 aa).

The tract at residues 35–164 is disordered; it reads SSVSAETEQQ…RQTAAQENKN (130 aa). Residues 37–52 are compositionally biased toward polar residues; that stretch reads VSAETEQQTSDKVVTQ. Low complexity predominate over residues 71 to 85; it reads TKQAQTEQTQAQSQA. The span at 86 to 108 shows a compositional bias: polar residues; it reads NVADTSTSITKETPSQNITTQAN. A compositionally biased stretch (basic and acidic residues) spans 109–133; the sequence is SDDKTVTNTKSEEAQTSEERTKQAE. The segment covering 134 to 149 has biased composition (low complexity); the sequence is EAQATASSQALTQAKA. The segment covering 154 to 163 has biased composition (polar residues); the sequence is QRQTAAQENK. Cell wall-binding repeat units follow at residues 171–190, 192–211, 1095–1115, 1116–1136, 1137–1156, 1180–1201, 1202–1221, 1223–1244, 1246–1266, 1267–1286, 1310–1330, 1331–1350, 1352–1372, and 1374–1394; these read IPNV…DGQP, KNFA…NTGA, STGF…GYQA, KNSF…NGHM, VYGL…NGVQ, SNGY…SGVM, AVGL…DGYQ, KGAW…SGNM, VNRF…DGIA, LVGV…DGKQ, RNIF…DGVA, VTGS…DGKQ, KGSF…SGEL, and VNRF…NGEA.

It belongs to the glycosyl hydrolase 70 family.

Its subcellular location is the secreted. The enzyme catalyses [(1-&gt;6)-alpha-D-glucosyl](n) + sucrose = [(1-&gt;6)-alpha-D-glucosyl](n+1) + D-fructose. Functionally, production of extracellular glucans, that are thought to play a key role in the development of the dental plaque because of their ability to adhere to smooth surfaces and mediate the aggregation of bacterial cells and food debris. In Streptococcus mutans serotype c (strain ATCC 700610 / UA159), this protein is Glucosyltransferase-S (gtfD).